Here is a 391-residue protein sequence, read N- to C-terminus: Tyrosine recombinase XerC-like (391 aa).

A Core-binding (CB) domain is found at 64–148 (VTLGDLMHTW…FLKTFFNYAV (85 aa)). In terms of domain architecture, Tyr recombinase spans 175–384 (TEIETFSDEE…IPKQKTNAVE (210 aa)). Catalysis depends on residues arginine 210, lysine 244, histidine 335, arginine 338, and histidine 361. The active-site O-(3'-phospho-DNA)-tyrosine intermediate is tyrosine 371.

The protein belongs to the 'phage' integrase family.

It localises to the cytoplasm. Site-specific tyrosine recombinase, which acts by catalyzing the cutting and rejoining of the recombining DNA molecules. This Caldanaerobacter subterraneus subsp. tengcongensis (strain DSM 15242 / JCM 11007 / NBRC 100824 / MB4) (Thermoanaerobacter tengcongensis) protein is Tyrosine recombinase XerC-like.